Here is a 473-residue protein sequence, read N- to C-terminus: Arginine biosynthesis bifunctional protein ArgJ, mitochondrial (473 aa).

The substrate site is built by T201, K230, T241, E328, N468, and T473. T241 acts as the Nucleophile in catalysis.

The protein belongs to the ArgJ family. Heterodimer of an alpha and a beta chain. The alpha and beta chains are autoproteolytically processed from a single precursor protein within the mitochondrion.

It is found in the mitochondrion matrix. The enzyme catalyses N(2)-acetyl-L-ornithine + L-glutamate = N-acetyl-L-glutamate + L-ornithine. It carries out the reaction L-glutamate + acetyl-CoA = N-acetyl-L-glutamate + CoA + H(+). The protein operates within amino-acid biosynthesis; L-arginine biosynthesis; L-ornithine and N-acetyl-L-glutamate from L-glutamate and N(2)-acetyl-L-ornithine (cyclic): step 1/1. It participates in amino-acid biosynthesis; L-arginine biosynthesis; N(2)-acetyl-L-ornithine from L-glutamate: step 1/4. Its function is as follows. Catalyzes two activities which are involved in the cyclic version of arginine biosynthesis: the synthesis of acetylglutamate from glutamate and acetyl-CoA, and of ornithine by transacetylation between acetylornithine and glutamate. This Paracoccidioides brasiliensis (strain Pb18) protein is Arginine biosynthesis bifunctional protein ArgJ, mitochondrial.